The following is a 193-amino-acid chain: dCTP deaminase, dUMP-forming (193 aa).

DCTP contacts are provided by residues 107–112 (RSSLGR), D125, 133–135 (TLE), Q154, and Y168. E135 acts as the Proton donor/acceptor in catalysis. The tract at residues 169-193 (AESSGKYHGDERPSPSKMHLDFCRG) is disordered. The span at 173 to 193 (GKYHGDERPSPSKMHLDFCRG) shows a compositional bias: basic and acidic residues.

It belongs to the dCTP deaminase family. As to quaternary structure, homotrimer.

It carries out the reaction dCTP + 2 H2O = dUMP + NH4(+) + diphosphate. It functions in the pathway pyrimidine metabolism; dUMP biosynthesis; dUMP from dCTP: step 1/1. In terms of biological role, bifunctional enzyme that catalyzes both the deamination of dCTP to dUTP and the hydrolysis of dUTP to dUMP without releasing the toxic dUTP intermediate. This chain is dCTP deaminase, dUMP-forming, found in Methanopyrus kandleri (strain AV19 / DSM 6324 / JCM 9639 / NBRC 100938).